We begin with the raw amino-acid sequence, 132 residues long: Intraflagellar transport protein 20 homolog B (132 aa).

The stretch at 87–112 (EAQQQQLYALIAEKKMQLERYRIEYD) forms a coiled coil.

It localises to the golgi apparatus. The protein resides in the cis-Golgi network. Its subcellular location is the cytoplasm. It is found in the cytoskeleton. The protein localises to the microtubule organizing center. It localises to the centrosome. The protein resides in the centriole. Its subcellular location is the cell projection. It is found in the cilium. Involved in ciliary process assembly. May play a role in the trafficking of ciliary membrane proteins from the Golgi complex to the cilium. Regulates the platelet-derived growth factor receptor-alpha (PDGFRA) signaling pathway. Plays an important role in spermatogenesis, particularly spermiogenesis, when germ cells form flagella. The sequence is that of Intraflagellar transport protein 20 homolog B (ift20-b) from Xenopus laevis (African clawed frog).